The primary structure comprises 170 residues: Shikimate kinase (170 aa).

11–16 is a binding site for ATP; it reads LSGKST. Ser15 serves as a coordination point for Mg(2+). Substrate contacts are provided by Asp33, Arg57, and Gly79. ATP is bound at residue Arg119. Arg137 provides a ligand contact to substrate.

This sequence belongs to the shikimate kinase family. In terms of assembly, monomer. Mg(2+) is required as a cofactor.

It is found in the cytoplasm. It catalyses the reaction shikimate + ATP = 3-phosphoshikimate + ADP + H(+). The protein operates within metabolic intermediate biosynthesis; chorismate biosynthesis; chorismate from D-erythrose 4-phosphate and phosphoenolpyruvate: step 5/7. In terms of biological role, catalyzes the specific phosphorylation of the 3-hydroxyl group of shikimic acid using ATP as a cosubstrate. The polypeptide is Shikimate kinase (Clostridium botulinum (strain Langeland / NCTC 10281 / Type F)).